A 468-amino-acid chain; its full sequence is 23S rRNA (uracil(1939)-C(5))-methyltransferase RlmD (468 aa).

Residues 12 to 70 (SKQLSPKLSLNVTQLDHLGAGMAQHQGKVVFIPQALPGERVSVQLTDQKKSFAKAKLIK) enclose the TRAM domain. [4Fe-4S] cluster contacts are provided by Cys-83, Cys-89, Cys-92, and Cys-174. S-adenosyl-L-methionine-binding residues include Gln-296, Phe-325, Asn-330, Glu-351, Asp-378, and Asp-398. Cys-424 serves as the catalytic Nucleophile.

This sequence belongs to the class I-like SAM-binding methyltransferase superfamily. RNA M5U methyltransferase family. RlmD subfamily.

It carries out the reaction uridine(1939) in 23S rRNA + S-adenosyl-L-methionine = 5-methyluridine(1939) in 23S rRNA + S-adenosyl-L-homocysteine + H(+). Its function is as follows. Catalyzes the formation of 5-methyl-uridine at position 1939 (m5U1939) in 23S rRNA. The polypeptide is 23S rRNA (uracil(1939)-C(5))-methyltransferase RlmD (Shewanella denitrificans (strain OS217 / ATCC BAA-1090 / DSM 15013)).